Here is a 370-residue protein sequence, read N- to C-terminus: Protein commissureless 1 (370 aa).

Residues 1-136 (MISTTDYPTV…DADMHVIINY (136 aa)) are Extracellular-facing. Positions 108-131 (LRDRSEESGESSWWSQIFGDADMH) are required for vesicular localization. The helical transmembrane segment at 137–157 (LWIGVVSSLVILSLVFILFSC) threads the bilayer. Residues 158–370 (YFYRKFRTWK…CASLVVVVAA (213 aa)) are Cytoplasmic-facing. 2 short sequence motifs (PY-motif) span residues 220–223 (PPCY) and 229–232 (LPSY). The interaction with Nedd4 stretch occupies residues 227 to 237 (TGLPSYDEALH). Residues 287–312 (VEEDKADSSSSTSASASPSSSESSNL) form a disordered region. Positions 294-312 (SSSSTSASASPSSSESSNL) are enriched in low complexity.

Belongs to the commissureless family. In terms of assembly, interacts (probably via PY-motifs) with Nedd4 (via WW2 domain). Interacts with Robo. In terms of processing, ubiquitinated by Nedd4; which promotes endocytosis of the comm/robo complex and comm proteasomal degradation. Not ubiquitinated by Nedd4.

It localises to the cytoplasmic vesicle membrane. The protein localises to the cell membrane. In terms of biological role, controls axon guidance across the CNS midline by preventing the delivery of Robo to the growth cone. The polypeptide is Protein commissureless 1 (Drosophila melanogaster (Fruit fly)).